The following is a 1079-amino-acid chain: Spermatogenesis-associated protein 31G1 (1079 aa).

8 disordered regions span residues Glu97–Gly145, Glu261–Val281, Gly297–Leu317, Lys331–Leu362, Glu376–Pro412, Asn506–Pro566, Val637–Lys678, and Pro840–Ala975. Over residues Val98–Ser113 the composition is skewed to acidic residues. Residues Phe336–Gln345 are compositionally biased toward pro residues. The segment covering Leu398–Pro412 has biased composition (basic and acidic residues). Composition is skewed to low complexity over residues Asn551–Leu562 and Ser645–Ser655. A compositionally biased stretch (basic and acidic residues) spans Pro669–Lys678. Over residues Ala942–Pro951 the composition is skewed to basic residues.

In terms of biological role, dispensable for normal development and fertility. This chain is Spermatogenesis-associated protein 31G1, found in Homo sapiens (Human).